The sequence spans 216 residues: N-glycosylase/DNA lyase (216 aa).

Residues Gln27, Ser48, and Trp59 each coordinate 8-oxoguanine. A helix-hairpin-helix region spans residues 106-170; the sequence is EHYYENMVAL…LDYRLKKINP (65 aa). Lys130 functions as the Schiff-base intermediate with DNA in the catalytic mechanism. Residues Phe134 and Pro160 each coordinate 8-oxoguanine. Asp162 is an active-site residue. Residues Asp190 and Trp194 each contribute to the 8-oxoguanine site.

It belongs to the archaeal N-glycosylase/DNA lyase (AGOG) family.

The enzyme catalyses 2'-deoxyribonucleotide-(2'-deoxyribose 5'-phosphate)-2'-deoxyribonucleotide-DNA = a 3'-end 2'-deoxyribonucleotide-(2,3-dehydro-2,3-deoxyribose 5'-phosphate)-DNA + a 5'-end 5'-phospho-2'-deoxyribonucleoside-DNA + H(+). Functionally, DNA repair enzyme that is part of the base excision repair (BER) pathway; protects from oxidative damage by removing the major product of DNA oxidation, 8-oxoguanine (GO), from single- and double-stranded DNA substrates. This chain is N-glycosylase/DNA lyase, found in Nanoarchaeum equitans (strain Kin4-M).